The sequence spans 537 residues: Zinc finger and BTB domain-containing protein 18 (537 aa).

Positions 24-91 (CDSTVLVGDA…MYEGKLQFKS (68 aa)) constitute a BTB domain. The span at 122 to 143 (TAEADSTKREEDTSSCSDKVES) shows a compositional bias: basic and acidic residues. Disordered regions lie at residues 122–232 (TAEA…RVSA) and 335–355 (ASELERDDKGGDDDTDVLGGD). Composition is skewed to low complexity over residues 182–195 (RLPSDRTTSPTTSP) and 208–229 (SPAGSPSSSSGSLSRRSAASRR). C2H2-type zinc fingers lie at residues 385–407 (FMCPLCNKVFPSPHILQIHLSTH), 425–447 (PTCSICGKTFSCMYTLKRHERTH), 453–475 (YTCTTCGKSFQYSHNLSRHAVVH), and 481–504 (HACKWCERRFTQSGDLYRHIRKFH).

The protein belongs to the krueppel C2H2-type zinc-finger protein family. ZBTB18 subfamily.

It is found in the nucleus. Functionally, transcriptional repressor that plays a role in various developmental processes. Specifically binds the consensus DNA sequence 5'-[AC]ACATCTG[GT][AC]-3' which contains the E box core, and acts by recruiting chromatin remodeling multiprotein complexes. This Danio rerio (Zebrafish) protein is Zinc finger and BTB domain-containing protein 18 (zbtb18).